Here is a 222-residue protein sequence, read N- to C-terminus: MIDYQEVLSRYRPTQEEENRLRIISDDIIRKINSICRSRRLRAEAVIVGSYAKGTNLRDGDLDIFIAFDRDYPEEIINTEGLHIGHAVIPNGREKYAEHPYVSGEIGGVKIDVVPCYKMSFGDRKISAVDRTLLHTEYVNGHLDEKGRDEVRLLKIFTKSIGVYGAEARTFGFSGYLCELLVIRFRSFENVIRYFSKAKGRVLIDPDERFRDPMLLIDPVDP.

Ser50 and Lys53 together coordinate ATP. The CTP site is built by Ser50 and Lys53. The Mg(2+) site is built by Asp61, Asp63, and Asp112. Residues His135, Lys155, and Tyr164 each coordinate ATP. CTP contacts are provided by His135, Lys155, and Tyr164.

This sequence belongs to the tRNA nucleotidyltransferase/poly(A) polymerase family. Archaeal CCA-adding enzyme subfamily. As to quaternary structure, homodimer. Requires Mg(2+) as cofactor.

The catalysed reaction is a tRNA precursor + 2 CTP + ATP = a tRNA with a 3' CCA end + 3 diphosphate. It catalyses the reaction a tRNA with a 3' CCA end + 2 CTP + ATP = a tRNA with a 3' CCACCA end + 3 diphosphate. Catalyzes the addition and repair of the essential 3'-terminal CCA sequence in tRNAs without using a nucleic acid template. Adds these three nucleotides in the order of C, C, and A to the tRNA nucleotide-73, using CTP and ATP as substrates and producing inorganic pyrophosphate. tRNA 3'-terminal CCA addition is required both for tRNA processing and repair. Also involved in tRNA surveillance by mediating tandem CCA addition to generate a CCACCA at the 3' terminus of unstable tRNAs. While stable tRNAs receive only 3'-terminal CCA, unstable tRNAs are marked with CCACCA and rapidly degraded. The protein is CCA-adding enzyme of Thermoplasma acidophilum.